A 258-amino-acid polypeptide reads, in one-letter code: Cobalt-precorrin-4 C(11)-methyltransferase (258 aa).

The protein belongs to the precorrin methyltransferase family. In terms of assembly, homodimer.

The enzyme catalyses Co-precorrin-4 + S-adenosyl-L-methionine = Co-precorrin-5A + S-adenosyl-L-homocysteine + H(+). Its pathway is cofactor biosynthesis; adenosylcobalamin biosynthesis; cob(II)yrinate a,c-diamide from sirohydrochlorin (anaerobic route): step 4/10. Its function is as follows. Catalyzes the methylation of C-11 in cobalt-precorrin-4 to form cobalt-precorrin-5A. The chain is Cobalt-precorrin-4 C(11)-methyltransferase (cbiF) from Priestia megaterium (Bacillus megaterium).